A 98-amino-acid polypeptide reads, in one-letter code: Large ribosomal subunit protein uL23 (98 aa).

It belongs to the universal ribosomal protein uL23 family. Part of the 50S ribosomal subunit. Contacts protein L29, and trigger factor when it is bound to the ribosome.

In terms of biological role, one of the early assembly proteins it binds 23S rRNA. One of the proteins that surrounds the polypeptide exit tunnel on the outside of the ribosome. Forms the main docking site for trigger factor binding to the ribosome. The protein is Large ribosomal subunit protein uL23 of Bordetella petrii (strain ATCC BAA-461 / DSM 12804 / CCUG 43448).